The chain runs to 291 residues: Small ribosomal subunit biogenesis GTPase RsgA 2 (291 aa).

A CP-type G domain is found at 63–221 (ENALVRPPVA…VADTPGFSSI (159 aa)). Residues 112 to 115 (SKMD) and 164 to 172 (GQSGVGKST) contribute to the GTP site. 4 residues coordinate Zn(2+): Cys245, Cys250, His252, and Cys258.

This sequence belongs to the TRAFAC class YlqF/YawG GTPase family. RsgA subfamily. As to quaternary structure, monomer. Associates with 30S ribosomal subunit, binds 16S rRNA. Zn(2+) serves as cofactor.

The protein localises to the cytoplasm. One of several proteins that assist in the late maturation steps of the functional core of the 30S ribosomal subunit. Helps release RbfA from mature subunits. May play a role in the assembly of ribosomal proteins into the subunit. Circularly permuted GTPase that catalyzes slow GTP hydrolysis, GTPase activity is stimulated by the 30S ribosomal subunit. This chain is Small ribosomal subunit biogenesis GTPase RsgA 2, found in Listeria monocytogenes serovar 1/2a (strain ATCC BAA-679 / EGD-e).